A 196-amino-acid polypeptide reads, in one-letter code: Protein hunchback (196 aa).

Disordered regions lie at residues 16 to 60 (SHHH…NTNL) and 90 to 196 (AMTP…KYMA). Over residues 17–30 (HHHHHHHAHHSYHQ) the composition is skewed to basic residues. A compositionally biased stretch (polar residues) spans 92–103 (TPSSSNNDQNSP). A compositionally biased stretch (low complexity) spans 125 to 144 (PTATTTTTPAAAAPTTTAAT). Positions 176-196 (AEREKEHDLMSNSSEDMKYMA) are enriched in basic and acidic residues.

The protein belongs to the hunchback C2H2-type zinc-finger protein family.

It is found in the nucleus. Gap class segmentation protein that controls development of head structures. In Drosophila silvestris (Fruit fly), this protein is Protein hunchback (hb).